The primary structure comprises 1925 residues: Plexin-D1 (1925 aa).

Over residues 1–18 the composition is skewed to low complexity; sequence MAPRAAGGAPLSARAAAA. The interval 1–23 is disordered; sequence MAPRAAGGAPLSARAAAASPPPF. Positions 1–46 are cleaved as a signal peptide; the sequence is MAPRAAGGAPLSARAAAASPPPFQTPPRCPVPLLLLLLLGAARAGA. The region spanning 47 to 546 is the Sema domain; it reads LEIQRRFPSP…TSHQMARVKV (500 aa). The Extracellular portion of the chain corresponds to 47 to 1271; the sequence is LEIQRRFPSP…TLQLGGSETA (1225 aa). The N-linked (GlcNAc...) asparagine glycan is linked to Asn-86. Cystine bridges form between Cys-104/Cys-114 and Cys-140/Cys-148. N-linked (GlcNAc...) asparagine glycans are attached at residues Asn-155, Asn-188, and Asn-224. Disulfide bonds link Cys-322-Cys-445 and Cys-345-Cys-389. 2 N-linked (GlcNAc...) asparagine glycosylation sites follow: Asn-481 and Asn-500. 5 disulfides stabilise this stretch: Cys-549/Cys-566, Cys-555/Cys-600, Cys-558/Cys-575, Cys-569/Cys-581, and Cys-637/Cys-661. Asn-583 carries an N-linked (GlcNAc...) asparagine glycan. Residues Asn-696, Asn-736, Asn-802, Asn-965, Asn-1017, Asn-1060, Asn-1099, Asn-1118, Asn-1132, Asn-1237, and Asn-1257 are each glycosylated (N-linked (GlcNAc...) asparagine). 3 consecutive IPT/TIG domains span residues 891-979, 981-1066, and 1069-1160; these read PEIH…FSYV, PLVH…FWYM, and PVIT…LDPE. A helical membrane pass occupies residues 1272–1292; it reads IIVSIVICSVLLLLSVVALFV. Over 1293-1925 the chain is Cytoplasmic; sequence FCTKSRRAER…DNIYECYSEA (633 aa).

This sequence belongs to the plexin family. In terms of assembly, interacts with NRP1 and SEMA4A. Interacts with SH3BP1; they dissociate upon SEMA3E binding to PLXND1 allowing SH3BP1 to transduce downstream signal through RAC1 inactivation. Detected at low levels in heart, placenta, lung, skeletal muscle, kidney, thymus and liver. Detected at very low levels in brain, colon, spleen, small intestine and peripheral blood leukocytes.

It localises to the cell membrane. The protein resides in the cell projection. Its subcellular location is the lamellipodium membrane. In terms of biological role, cell surface receptor for SEMA4A and for class 3 semaphorins, such as SEMA3A, SEMA3C and SEMA3E. Plays an important role in cell-cell signaling, and in regulating the migration of a wide spectrum of cell types. Regulates the migration of thymocytes in the medulla. Regulates endothelial cell migration. Plays an important role in ensuring the specificity of synapse formation. Required for normal development of the heart and vasculature. Mediates anti-angiogenic signaling in response to SEMA3E. The chain is Plexin-D1 (PLXND1) from Homo sapiens (Human).